A 114-amino-acid polypeptide reads, in one-letter code: UPF0102 protein CD630_12710 (114 aa).

The protein belongs to the UPF0102 family.

The sequence is that of UPF0102 protein CD630_12710 from Clostridioides difficile (strain 630) (Peptoclostridium difficile).